A 278-amino-acid polypeptide reads, in one-letter code: 4-deoxy-L-threo-5-hexosulose-uronate ketol-isomerase (278 aa).

Residues His196, His198, Glu203, and His245 each contribute to the Zn(2+) site.

It belongs to the KduI family. Zn(2+) serves as cofactor.

The enzyme catalyses 5-dehydro-4-deoxy-D-glucuronate = 3-deoxy-D-glycero-2,5-hexodiulosonate. The protein operates within glycan metabolism; pectin degradation; 2-dehydro-3-deoxy-D-gluconate from pectin: step 4/5. Catalyzes the isomerization of 5-dehydro-4-deoxy-D-glucuronate to 3-deoxy-D-glycero-2,5-hexodiulosonate. This is 4-deoxy-L-threo-5-hexosulose-uronate ketol-isomerase from Shigella flexneri.